The primary structure comprises 631 residues: Methanol dehydrogenase [cytochrome c] subunit 1 (631 aa).

The N-terminal stretch at 1–32 is a signal peptide; it reads MNRNTPKARGASSLAMAVAMGLAVLTTAPATA. Cysteine 135 and cysteine 136 form a disulfide bridge. Residues glutamate 209 and asparagine 293 each coordinate Ca(2+). Aspartate 335 (proton acceptor) is an active-site residue. Residues cysteine 418 and cysteine 447 are joined by a disulfide bond.

The protein belongs to the bacterial PQQ dehydrogenase family. As to quaternary structure, heterotetramer composed of 2 alpha and 2 beta subunits. It depends on pyrroloquinoline quinone as a cofactor. Requires Ca(2+) as cofactor.

Its subcellular location is the periplasm. It catalyses the reaction 2 Fe(III)-[cytochrome cL] + a primary alcohol = 2 Fe(II)-[cytochrome cL] + an aldehyde + 2 H(+). Catalyzes the oxidation of primary alcohols including methanol. The protein is Methanol dehydrogenase [cytochrome c] subunit 1 (moxF) of Paracoccus denitrificans.